Here is a 982-residue protein sequence, read N- to C-terminus: Protein lin-10 (982 aa).

The span at 1-16 (MSSEAVAQATAATTSP) shows a compositional bias: polar residues. Disordered regions lie at residues 1-55 (MSSE…MIPP), 119-228 (QPAL…RTDS), 269-327 (TVAD…STVP), 432-511 (FAQQ…GTDD), and 525-593 (QREQ…SKET). Gly residues predominate over residues 33 to 44 (KGGGAGGGGGGE). Over residues 119–134 (QPALQQPRPSSQASSS) the composition is skewed to low complexity. Polar residues-rich tracts occupy residues 143–156 (RQTAGSVVSSNVSP) and 169–190 (ETSGVVQNNDELLVPTSTSSDV). Over residues 211–228 (GEEKSEEKRKLSGDRTDS) the composition is skewed to basic and acidic residues. The segment covering 301–318 (SLNQLRSSFNLPDDSTTV) has biased composition (polar residues). 2 stretches are compositionally biased toward low complexity: residues 432 to 445 (FAQQQIAQSAAPTP) and 454 to 464 (PSTSSGPSGAL). Polar residues predominate over residues 490 to 501 (NGTSTSTTNGAQ). A compositionally biased stretch (low complexity) spans 539–550 (QEAATAAQEAAE). The segment covering 577–593 (GAERRGSVDKKKNSKET) has biased composition (basic and acidic residues). In terms of domain architecture, PID spans 604–788 (GVLFRARYLG…VLNSQELLGD (185 aa)). PDZ domains are found at residues 801–886 (EVVV…TVVS) and 892–968 (EVRI…MPTS).

As to quaternary structure, interacts (via N-terminus) with egl-9 isoform e (via catalytic domain); the interaction regulates its trafficking; the interaction is direct. Interacts with rab-6.2 (in GTP-bound form). Phosphorylated on multiple Ser and Thr residues by cdk-5 which regulates its localization. In terms of processing, may be hydroxylated by egl-9 isoform e on multiple Pro residues which may prevent phosphorylation by cdk-5. As to expression, expressed in vulval epithelial cells and neurons.

It localises to the golgi apparatus. Its subcellular location is the golgi stack membrane. It is found in the trans-Golgi network membrane. The protein localises to the cytoplasm. The protein resides in the synapse. It localises to the perikaryon. In terms of biological role, required specifically for the determination of 3 vulval precursor cell fates P5.p, P6.p and P7.p during late second and early third larval stages; required for basolateral localization of receptor tyrosine kinase let-23. Could have a general but redundant role in development, functioning in diverse cell lineages to control cell fates. Regulates the trafficking of the glr-1 subunit of AMPA-type glutamate receptors (AMPRs) in the ventral nerve cord. This may be partly through interacting with the small GTPase rab-6.2 in its active GTP-bound state. In Caenorhabditis elegans, this protein is Protein lin-10.